We begin with the raw amino-acid sequence, 648 residues long: cAMP-dependent protein kinase catalytic subunit (648 aa).

Composition is skewed to low complexity over residues methionine 1–asparagine 20, serine 46–glycine 67, glutamine 136–glutamine 175, and asparagine 232–threonine 254. Disordered regions lie at residues methionine 1–valine 25, glycine 40–aspartate 86, lysine 121–glutamine 175, and glutamine 219–proline 290. Residues serine 255–proline 290 are compositionally biased toward polar residues. The Protein kinase domain maps to phenylalanine 336–phenylalanine 590. ATP-binding positions include isoleucine 342–valine 350 and lysine 365. Aspartate 459 serves as the catalytic Proton acceptor. Residue threonine 490 is modified to Phosphothreonine. An AGC-kinase C-terminal domain is found at serine 591–phenylalanine 648.

This sequence belongs to the protein kinase superfamily. AGC Ser/Thr protein kinase family. cAMP subfamily. In Dictyostelium the holoenzyme is a dimer composed of a regulatory (R) and a catalytic (C) subunit. In the presence of cAMP it dissociates into the active C subunit and an R monomer.

The catalysed reaction is L-seryl-[protein] + ATP = O-phospho-L-seryl-[protein] + ADP + H(+). It catalyses the reaction L-threonyl-[protein] + ATP = O-phospho-L-threonyl-[protein] + ADP + H(+). In terms of biological role, essential for differentiation and fruit morphogenesis. The sequence is that of cAMP-dependent protein kinase catalytic subunit (pkaC) from Dictyostelium discoideum (Social amoeba).